The following is a 254-amino-acid chain: Precorrin-3B C(17)-methyltransferase (254 aa).

The protein belongs to the precorrin methyltransferase family.

It carries out the reaction precorrin-3B + S-adenosyl-L-methionine = precorrin-4 + S-adenosyl-L-homocysteine + 3 H(+). It participates in cofactor biosynthesis; adenosylcobalamin biosynthesis; cob(II)yrinate a,c-diamide from precorrin-2 (aerobic route): step 3/10. Functionally, methyltransferase that catalyzes the methylation of C-17 in precorrin-3B to form precorrin-4. The polypeptide is Precorrin-3B C(17)-methyltransferase (cobJ) (Sinorhizobium sp).